The primary structure comprises 140 residues: Nucleoside diphosphate kinase (140 aa).

ATP-binding residues include Lys11, Phe59, Arg87, Thr93, Arg104, and Asn114. His117 functions as the Pros-phosphohistidine intermediate in the catalytic mechanism.

Belongs to the NDK family. As to quaternary structure, homotetramer. The cofactor is Mg(2+).

The protein localises to the cytoplasm. It carries out the reaction a 2'-deoxyribonucleoside 5'-diphosphate + ATP = a 2'-deoxyribonucleoside 5'-triphosphate + ADP. It catalyses the reaction a ribonucleoside 5'-diphosphate + ATP = a ribonucleoside 5'-triphosphate + ADP. In terms of biological role, major role in the synthesis of nucleoside triphosphates other than ATP. The ATP gamma phosphate is transferred to the NDP beta phosphate via a ping-pong mechanism, using a phosphorylated active-site intermediate. The polypeptide is Nucleoside diphosphate kinase (Ruegeria sp. (strain TM1040) (Silicibacter sp.)).